Reading from the N-terminus, the 232-residue chain is Ribonuclease 3 (232 aa).

The RNase III domain occupies 5-134; the sequence is QTVLKNHFAI…FLGALLLDKD (130 aa). E47 is a binding site for Mg(2+). D51 is an active-site residue. Mg(2+) is bound by residues D120 and E123. The active site involves E123. The 70-residue stretch at 160–229 folds into the DRBM domain; the sequence is DYKTHLQELL…AKNAVEKGLD (70 aa).

Belongs to the ribonuclease III family. In terms of assembly, homodimer. Mg(2+) is required as a cofactor.

It is found in the cytoplasm. The catalysed reaction is Endonucleolytic cleavage to 5'-phosphomonoester.. Functionally, digests double-stranded RNA. Involved in the processing of primary rRNA transcript to yield the immediate precursors to the large and small rRNAs (23S and 16S). Processes some mRNAs, and tRNAs when they are encoded in the rRNA operon. Processes pre-crRNA and tracrRNA of type II CRISPR loci if present in the organism. This is Ribonuclease 3 from Streptococcus pneumoniae serotype 4 (strain ATCC BAA-334 / TIGR4).